A 101-amino-acid polypeptide reads, in one-letter code: Large ribosomal subunit protein uL23 (101 aa).

This sequence belongs to the universal ribosomal protein uL23 family. As to quaternary structure, part of the 50S ribosomal subunit. Contacts protein L29, and trigger factor when it is bound to the ribosome.

One of the early assembly proteins it binds 23S rRNA. One of the proteins that surrounds the polypeptide exit tunnel on the outside of the ribosome. Forms the main docking site for trigger factor binding to the ribosome. This chain is Large ribosomal subunit protein uL23, found in Haemophilus ducreyi (strain 35000HP / ATCC 700724).